A 463-amino-acid polypeptide reads, in one-letter code: L-seryl-tRNA(Sec) selenium transferase (463 aa).

At Lys-295 the chain carries N6-(pyridoxal phosphate)lysine.

This sequence belongs to the SelA family. Homodecamer; pentamer of dimers. Binds only one seryl-tRNA(Sec) per dimer. The cofactor is pyridoxal 5'-phosphate.

It is found in the cytoplasm. The enzyme catalyses L-seryl-tRNA(Sec) + selenophosphate + H(+) = L-selenocysteinyl-tRNA(Sec) + phosphate. Its pathway is aminoacyl-tRNA biosynthesis; selenocysteinyl-tRNA(Sec) biosynthesis; selenocysteinyl-tRNA(Sec) from L-seryl-tRNA(Sec) (bacterial route): step 1/1. Functionally, converts seryl-tRNA(Sec) to selenocysteinyl-tRNA(Sec) required for selenoprotein biosynthesis. This chain is L-seryl-tRNA(Sec) selenium transferase, found in Salmonella dublin (strain CT_02021853).